A 96-amino-acid chain; its full sequence is UPF0235 protein YggU (96 aa).

It belongs to the UPF0235 family.

The protein is UPF0235 protein YggU of Shigella flexneri.